Reading from the N-terminus, the 514-residue chain is ATP synthase subunit alpha (514 aa).

Residue 170–177 (GDRQIGKT) participates in ATP binding.

Belongs to the ATPase alpha/beta chains family. As to quaternary structure, F-type ATPases have 2 components, CF(1) - the catalytic core - and CF(0) - the membrane proton channel. CF(1) has five subunits: alpha(3), beta(3), gamma(1), delta(1), epsilon(1). CF(0) has three main subunits: a(1), b(2) and c(9-12). The alpha and beta chains form an alternating ring which encloses part of the gamma chain. CF(1) is attached to CF(0) by a central stalk formed by the gamma and epsilon chains, while a peripheral stalk is formed by the delta and b chains.

It is found in the cell inner membrane. The catalysed reaction is ATP + H2O + 4 H(+)(in) = ADP + phosphate + 5 H(+)(out). Its function is as follows. Produces ATP from ADP in the presence of a proton gradient across the membrane. The alpha chain is a regulatory subunit. This Pseudomonas putida (strain ATCC 700007 / DSM 6899 / JCM 31910 / BCRC 17059 / LMG 24140 / F1) protein is ATP synthase subunit alpha.